The chain runs to 89 residues: Small ribosomal subunit protein uS15 (89 aa).

Belongs to the universal ribosomal protein uS15 family. Part of the 30S ribosomal subunit. Forms a bridge to the 50S subunit in the 70S ribosome, contacting the 23S rRNA.

Functionally, one of the primary rRNA binding proteins, it binds directly to 16S rRNA where it helps nucleate assembly of the platform of the 30S subunit by binding and bridging several RNA helices of the 16S rRNA. Forms an intersubunit bridge (bridge B4) with the 23S rRNA of the 50S subunit in the ribosome. The protein is Small ribosomal subunit protein uS15 of Escherichia coli O157:H7.